The following is a 61-amino-acid chain: Short neurotoxin 2 (61 aa).

Cystine bridges form between Cys-3–Cys-23, Cys-17–Cys-40, Cys-42–Cys-53, and Cys-54–Cys-59.

Belongs to the three-finger toxin family. Short-chain subfamily. Type I alpha-neurotoxin sub-subfamily. Expressed by the venom gland.

Its subcellular location is the secreted. In terms of biological role, binds to muscle nicotinic acetylcholine receptor (nAChR) and inhibit acetylcholine from binding to the receptor, thereby impairing neuromuscular transmission. The polypeptide is Short neurotoxin 2 (Naja haje haje (Egyptian cobra)).